A 197-amino-acid chain; its full sequence is Protein jagunal (197 aa).

Residues 1–39 lie on the Cytoplasmic side of the membrane; it reads MATRGGPMVAGTDGNDFEFRQRVAGTYQISLLNKSRLKY. A helical transmembrane segment spans residues 40 to 60; sequence CIFFHALLFFVMLAKLTSDIL. Over 61-78 the chain is Lumenal; the sequence is DHLDIFVLEIEELEVPPP. The helical transmembrane segment at 79–99 threads the bilayer; sequence LWWEYVWAASLLTSFLGLSAA. The Cytoplasmic segment spans residues 100 to 109; it reads RGNKVREMQK. A helical membrane pass occupies residues 110–130; it reads YMVAILLFAILPLFYCFAYYF. The Lumenal segment spans residues 131-159; it reads SDVWEFATLDKSVELDETDIFVWRGYPYG. Residues 160–180 traverse the membrane as a helical segment; it reads VFWYAFCFVGFQVHGFTLYFA. The Cytoplasmic portion of the chain corresponds to 181–197; the sequence is YNLVKAWKARTATRKFQ.

Belongs to the jagunal family.

It localises to the endoplasmic reticulum membrane. Required for endoplasmic reticulum organization and proper vesicular traffic during vitellogenesis. Required for oocyte and bristle growth. The protein is Protein jagunal of Drosophila melanogaster (Fruit fly).